The chain runs to 215 residues: ATP-dependent dethiobiotin synthetase BioD (215 aa).

13 to 18 is a binding site for ATP; sequence DIGKTV. T17 is a Mg(2+) binding site. K38 is an active-site residue. T42 contributes to the substrate binding site. ATP-binding positions include D50, 115–118, and 175–176; these read EGAG and NH. Mg(2+)-binding residues include D50 and E115.

It belongs to the dethiobiotin synthetase family. Homodimer. Mg(2+) serves as cofactor.

It is found in the cytoplasm. The catalysed reaction is (7R,8S)-7,8-diammoniononanoate + CO2 + ATP = (4R,5S)-dethiobiotin + ADP + phosphate + 3 H(+). Its pathway is cofactor biosynthesis; biotin biosynthesis; biotin from 7,8-diaminononanoate: step 1/2. Functionally, catalyzes a mechanistically unusual reaction, the ATP-dependent insertion of CO2 between the N7 and N8 nitrogen atoms of 7,8-diaminopelargonic acid (DAPA, also called 7,8-diammoniononanoate) to form a ureido ring. This Neisseria meningitidis serogroup B (strain ATCC BAA-335 / MC58) protein is ATP-dependent dethiobiotin synthetase BioD.